Reading from the N-terminus, the 531-residue chain is Peptide chain release factor 3 (531 aa).

Residues 10–278 (RRRRTFAIIS…SLIDWAPAPK (269 aa)) form the tr-type G domain. Residues 19–26 (SHPDAGKT), 87–91 (DTPGH), and 141–144 (NKYD) contribute to the GTP site.

Belongs to the TRAFAC class translation factor GTPase superfamily. Classic translation factor GTPase family. PrfC subfamily.

The protein resides in the cytoplasm. Its function is as follows. Increases the formation of ribosomal termination complexes and stimulates activities of RF-1 and RF-2. It binds guanine nucleotides and has strong preference for UGA stop codons. It may interact directly with the ribosome. The stimulation of RF-1 and RF-2 is significantly reduced by GTP and GDP, but not by GMP. This is Peptide chain release factor 3 from Neisseria gonorrhoeae (strain NCCP11945).